The sequence spans 391 residues: 3-demethoxyubiquinol 3-hydroxylase (391 aa).

Belongs to the UbiH/COQ6 family. Component of the Ubi complex metabolon, which regroups five ubiquinone biosynthesis proteins (UbiE, UbiF, UbiG, UbiH and UbiI) and two accessory factors (UbiK and the lipid-binding protein UbiJ). FAD is required as a cofactor.

The protein resides in the cytoplasm. It carries out the reaction a 5-methoxy-2-methyl-3-(all-trans-polyprenyl)benzene-1,4-diol + AH2 + O2 = a 3-demethylubiquinol + A + H2O. Its pathway is cofactor biosynthesis; ubiquinone biosynthesis. In terms of biological role, catalyzes the hydroxylation of 2-octaprenyl-3-methyl-6-methoxy-1,4-benzoquinol during ubiquinone biosynthesis. This Escherichia coli (strain K12) protein is 3-demethoxyubiquinol 3-hydroxylase (ubiF).